The chain runs to 178 residues: ATP-dependent protease subunit HslV (178 aa).

The active site involves T7. Positions 162, 165, and 168 each coordinate Na(+).

This sequence belongs to the peptidase T1B family. HslV subfamily. In terms of assembly, a double ring-shaped homohexamer of HslV is capped on each side by a ring-shaped HslU homohexamer. The assembly of the HslU/HslV complex is dependent on binding of ATP.

The protein resides in the cytoplasm. It carries out the reaction ATP-dependent cleavage of peptide bonds with broad specificity.. With respect to regulation, allosterically activated by HslU binding. Functionally, protease subunit of a proteasome-like degradation complex believed to be a general protein degrading machinery. This chain is ATP-dependent protease subunit HslV, found in Burkholderia ambifaria (strain ATCC BAA-244 / DSM 16087 / CCUG 44356 / LMG 19182 / AMMD) (Burkholderia cepacia (strain AMMD)).